We begin with the raw amino-acid sequence, 414 residues long: 3-phosphoshikimate 1-carboxyvinyltransferase (414 aa).

The 3-phosphoshikimate site is built by lysine 20, serine 21, and arginine 25. Position 20 (lysine 20) interacts with phosphoenolpyruvate. The phosphoenolpyruvate site is built by glycine 85 and arginine 113. Serine 154, serine 155, glutamine 156, serine 181, aspartate 296, and lysine 323 together coordinate 3-phosphoshikimate. Glutamine 156 contacts phosphoenolpyruvate. The active-site Proton acceptor is the aspartate 296. Arginine 327, arginine 371, and lysine 395 together coordinate phosphoenolpyruvate.

Belongs to the EPSP synthase family. In terms of assembly, monomer.

The protein localises to the cytoplasm. The enzyme catalyses 3-phosphoshikimate + phosphoenolpyruvate = 5-O-(1-carboxyvinyl)-3-phosphoshikimate + phosphate. The protein operates within metabolic intermediate biosynthesis; chorismate biosynthesis. Functionally, catalyzes the transfer of the enolpyruvyl moiety of phosphoenolpyruvate (PEP) to the 5-hydroxyl of shikimate-3-phosphate (S3P) to produce enolpyruvyl shikimate-3-phosphate and inorganic phosphate. The protein is 3-phosphoshikimate 1-carboxyvinyltransferase of Saccharolobus islandicus (strain Y.G.57.14 / Yellowstone #1) (Sulfolobus islandicus).